A 120-amino-acid chain; its full sequence is Small ribosomal subunit protein eS24 (120 aa).

Residues 101–120 (RDAGTKQKKGGSKGGQGAKG) are disordered.

The protein belongs to the eukaryotic ribosomal protein eS24 family.

In Saccharolobus islandicus (strain Y.N.15.51 / Yellowstone #2) (Sulfolobus islandicus), this protein is Small ribosomal subunit protein eS24.